Consider the following 332-residue polypeptide: Phosphate acyltransferase (332 aa).

Belongs to the PlsX family. As to quaternary structure, homodimer. Probably interacts with PlsY.

Its subcellular location is the cytoplasm. It carries out the reaction a fatty acyl-[ACP] + phosphate = an acyl phosphate + holo-[ACP]. The protein operates within lipid metabolism; phospholipid metabolism. Functionally, catalyzes the reversible formation of acyl-phosphate (acyl-PO(4)) from acyl-[acyl-carrier-protein] (acyl-ACP). This enzyme utilizes acyl-ACP as fatty acyl donor, but not acyl-CoA. The sequence is that of Phosphate acyltransferase from Nitratiruptor sp. (strain SB155-2).